The chain runs to 104 residues: Zinc-containing ferredoxin-2 (104 aa).

The segment at 2-37 (GIDPNYRQNRQVVGEHEGHKIYGPVEPPGKLGIHGT) is N-terminal extension. Positions 17, 20, and 35 each coordinate Zn(2+). 4Fe-4S ferredoxin-type domains follow at residues 38-66 (IVGVDFDVCIADGSCINACPVNVFQWFDT) and 75-104 (KADPINEKACIFCMACVNVCPVAAIDVKPP). The [3Fe-4S] cluster site is built by Cys46 and Cys52. Cys56 serves as a coordination point for [4Fe-4S] cluster. Zn(2+) is bound at residue Asp77. Residues Cys84, Cys87, and Cys90 each coordinate [4Fe-4S] cluster. Residue Cys94 coordinates [3Fe-4S] cluster.

The cofactor is [3Fe-4S] cluster. Requires [4Fe-4S] cluster as cofactor. Zn(2+) serves as cofactor.

In terms of biological role, ferredoxins are iron-sulfur proteins that transfer electrons in a wide variety of metabolic reactions. The protein is Zinc-containing ferredoxin-2 (zfx2) of Sulfurisphaera tokodaii (strain DSM 16993 / JCM 10545 / NBRC 100140 / 7) (Sulfolobus tokodaii).